Here is a 337-residue protein sequence, read N- to C-terminus: D-alanine--D-alanine ligase (337 aa).

The 207-residue stretch at Lys124–Asn330 folds into the ATP-grasp domain. An ATP-binding site is contributed by Ala154–Glu209. Residues Asp284, Glu297, and Asn299 each contribute to the Mg(2+) site.

It belongs to the D-alanine--D-alanine ligase family. Mg(2+) serves as cofactor. Requires Mn(2+) as cofactor.

It is found in the cytoplasm. It carries out the reaction 2 D-alanine + ATP = D-alanyl-D-alanine + ADP + phosphate + H(+). It participates in cell wall biogenesis; peptidoglycan biosynthesis. Cell wall formation. This Shewanella baltica (strain OS185) protein is D-alanine--D-alanine ligase.